The sequence spans 366 residues: tRNA/tmRNA (uracil-C(5))-methyltransferase (366 aa).

S-adenosyl-L-methionine contacts are provided by Gln-190, Tyr-218, Asn-223, Glu-239, and Asp-299. Catalysis depends on Cys-324, which acts as the Nucleophile. Glu-358 (proton acceptor) is an active-site residue.

It belongs to the class I-like SAM-binding methyltransferase superfamily. RNA M5U methyltransferase family. TrmA subfamily.

It carries out the reaction uridine(54) in tRNA + S-adenosyl-L-methionine = 5-methyluridine(54) in tRNA + S-adenosyl-L-homocysteine + H(+). The enzyme catalyses uridine(341) in tmRNA + S-adenosyl-L-methionine = 5-methyluridine(341) in tmRNA + S-adenosyl-L-homocysteine + H(+). Functionally, dual-specificity methyltransferase that catalyzes the formation of 5-methyluridine at position 54 (m5U54) in all tRNAs, and that of position 341 (m5U341) in tmRNA (transfer-mRNA). The polypeptide is tRNA/tmRNA (uracil-C(5))-methyltransferase (Salmonella paratyphi B (strain ATCC BAA-1250 / SPB7)).